Here is a 360-residue protein sequence, read N- to C-terminus: MWTSKTISFTLFITTTLLGSCNASAKAKTQPLFPAILIFGDSTVDTGNNNYPSQTIFRAKHVPYGIDLPNHSPNGRFSNGKIFSDIIATKLNIKQFVPPFLQPNLTDQEIVTGVCFASAGAGYDDQTSLTTQAIRVSEQPNMFKSYIARLKSIVGDKKAMKIINNALVVVSAGPNDFILNYYEVPSWRRMYPSISDYQDFVLSRLNNFVKELYSLGCRKILVGGLPPMGCLPIQMTAQFRNVLRFCLEQENRDSVLYNQKLQKLLPQTQASLTGSKILYSDVYDPMMEMLQNPSKYGFKETTRGCCGTGFLETSFMCNAYSSMCQNRSEFLFFDSIHPSEATYNYIGNVLDTKIRGWLKA.

The N-terminal stretch at 1–23 (MWTSKTISFTLFITTTLLGSCNA) is a signal peptide. Asn22 is a glycosylation site (N-linked (GlcNAc...) asparagine). Ser42 serves as the catalytic Nucleophile. N-linked (GlcNAc...) asparagine glycans are attached at residues Asn104 and Asn326. Residues Asp334 and His337 contribute to the active site.

The protein belongs to the 'GDSL' lipolytic enzyme family.

It is found in the secreted. This Arabidopsis thaliana (Mouse-ear cress) protein is GDSL esterase/lipase At1g58430.